The primary structure comprises 377 residues: 5-hydroxytryptamine receptor 1D (377 aa).

N-linked (GlcNAc...) asparagine glycosylation is found at asparagine 5, asparagine 17, and asparagine 21. The next 3 membrane-spanning stretches (helical) occupy residues 39-64, 76-97, and 110-134; these read ISLAVVLSIITVATVLSNTFVLTTIL, LIGSLATTDLLVSILVMPISIA, and LCDIWVSSDITCCTASILHLCVIAL. Cysteine 111 and cysteine 188 are joined by a disulfide. 2 residues coordinate serotonin: aspartate 118 and cysteine 122. Residues 135 to 137 carry the DRY motif; important for ligand-induced conformation changes motif; the sequence is DRY. A run of 4 helical transmembrane segments spans residues 155-176, 195-218, 301-326, and 336-359; these read AAAMIAVVWAISICISIPPLFW, ISYTIYSTCGAFYIPSVLLIVLYG, KTLGIILGAFIGCWLPFFVASLVLPI, and GLFDFFTWLGYLNSLINPIIYTVF. Serine 321 provides a ligand contact to serotonin. The short motif at 352 to 356 is the NPxxY motif; important for ligand-induced conformation changes and signaling element; the sequence is NPIIY.

It belongs to the G-protein coupled receptor 1 family. Homodimer. Heterodimer with HTR1B.

Its subcellular location is the cell membrane. G-protein coupled receptor for 5-hydroxytryptamine (serotonin). Also functions as a receptor for ergot alkaloid derivatives, various anxiolytic and antidepressant drugs and other psychoactive substances. Ligand binding causes a conformation change that triggers signaling via guanine nucleotide-binding proteins (G proteins) and modulates the activity of downstream effectors, such as adenylate cyclase. HTR1D is coupled to G(i)/G(o) G alpha proteins and mediates inhibitory neurotransmission by inhibiting adenylate cyclase activity. Regulates the release of 5-hydroxytryptamine in the brain, and thereby affects neural activity. May also play a role in regulating the release of other neurotransmitters. May play a role in vasoconstriction. This chain is 5-hydroxytryptamine receptor 1D (HTR1D), found in Oryctolagus cuniculus (Rabbit).